The primary structure comprises 450 residues: FAD-linked oxidoreductase penO (450 aa).

An FAD-binding PCMH-type domain is found at 32–203; sequence PPELPYAIVK…TRFFIRTRPA (172 aa).

This sequence belongs to the oxygen-dependent FAD-linked oxidoreductase family. Requires FAD as cofactor.

It functions in the pathway secondary metabolite biosynthesis. Its function is as follows. FAD-linked oxidoreductase; part of the gene cluster that mediates the biosynthesis of the indole diterpenes penitrems. The geranylgeranyl diphosphate (GGPP) synthase penG catalyzes the first step in penitrem biosynthesis via conversion of farnesyl pyrophosphate and isopentyl pyrophosphate into geranylgeranyl pyrophosphate (GGPP). Condensation of indole-3-glycerol phosphate with GGPP by the prenyl transferase penC then forms 3-geranylgeranylindole (3-GGI). Epoxidation by the FAD-dependent monooxygenase penM leads to a epoxidized-GGI that is substrate of the terpene cyclase penB for cyclization to yield paspaline. Paspaline is subsequently converted to 13-desoxypaxilline by the cytochrome P450 monooxygenase penP, the latter being then converted to paxilline by the cytochrome P450 monooxygenase penQ. Paxilline is converted to beta-paxitriol via C-10 ketoreduction by the short-chain dehydrogenase PC-15 which can be monoprenylated at the C-20 by the indole diterpene prenyltransferase penD. A two-step elimination (acetylation and elimination) process performed by the O-acetyltransferase PC-16 and the P.simplicissimum ptmI-ortholog not yet identified in P.crustosum, leads to the production of the prenylated form of penijanthine. The FAD-linked oxidoreductase ptmO then converts the prenylated form of penijanthine into PC-M5 which is in turn transformed into PC-M4 by the aromatic dimethylallyltransferase PC-22. A series of oxidation steps involving 4 cytochrome P450 monooxygenases (PC-21, PC-05, PC-23, PC-20) and a FAD-dependent monooxygenase (PC-14) are required for the transformation of PC-M4 to penitrems A and E. Synthesis of these final products is proposed to proceed via penitrems D and C (PC-21, PC-05, PC-14) and penitrems B and F (PC-21, PC-05, PC-14, PC-23). This is FAD-linked oxidoreductase penO from Penicillium crustosum (Blue mold fungus).